A 345-amino-acid polypeptide reads, in one-letter code: Isocitrate/homoisocitrate dehydrogenase (345 aa).

69–71 (TTT) is an NADH binding site. Arg-86, Arg-96, Arg-111, Tyr-118, Lys-163, and Asn-165 together coordinate (2R,3S)-homoisocitrate. Residue Asn-165 participates in NADH binding. Positions 194, 218, and 222 each coordinate Mg(2+). NADH-binding positions include 251–255 (GSAPD) and Asn-263.

It belongs to the isocitrate and isopropylmalate dehydrogenases family. Requires Mn(2+) as cofactor. It depends on Mg(2+) as a cofactor.

The enzyme catalyses D-threo-isocitrate + NAD(+) = 2-oxoglutarate + CO2 + NADH. It carries out the reaction (2R,3S)-homoisocitrate + NAD(+) = 2-oxoadipate + CO2 + NADH. The protein operates within amino-acid biosynthesis; L-lysine biosynthesis via AAA pathway; L-alpha-aminoadipate from 2-oxoglutarate: step 4/5. Catalyzes the NAD(+)-dependent oxidative decarboxylation of homoisocitrate to 2-oxoadipate (alpha-ketoadipate), and of isocitrate to 2-oxoglutarate, at near equal efficiency. May thus play a dual role in glutamate and lysine biosynthesis in vivo. Preferentially uses NAD over NADP. This chain is Isocitrate/homoisocitrate dehydrogenase, found in Pyrococcus horikoshii (strain ATCC 700860 / DSM 12428 / JCM 9974 / NBRC 100139 / OT-3).